We begin with the raw amino-acid sequence, 466 residues long: Putative D-3-phosphoglycerate dehydrogenase (466 aa).

Residues 1–15 (MDIKGGRRGNVEDSL) show a composition bias toward basic and acidic residues. A disordered region spans residues 1–26 (MDIKGGRRGNVEDSLNKLSLSPPDNN). Residues 16–26 (NKLSLSPPDNN) are compositionally biased toward polar residues. Ser87 carries the phosphoserine modification. NAD(+) contacts are provided by residues 205 to 206 (HI) and Asp225. The residue at position 258 (Ser258) is a Phosphoserine. Residues 282 to 284 (ASR) and Asp308 contribute to the NAD(+) site. Arg284 is an active-site residue. The active site involves Glu313. The active-site Proton donor is His344. 344–347 (HIGG) provides a ligand contact to NAD(+). The region spanning 396–466 (RVLFVHRNVP…PCKINTRLLY (71 aa)) is the ACT domain.

It belongs to the D-isomer specific 2-hydroxyacid dehydrogenase family.

It catalyses the reaction (2R)-3-phosphoglycerate + NAD(+) = 3-phosphooxypyruvate + NADH + H(+). The enzyme catalyses (R)-2-hydroxyglutarate + NAD(+) = 2-oxoglutarate + NADH + H(+). It participates in amino-acid biosynthesis; L-serine biosynthesis; L-serine from 3-phospho-D-glycerate: step 1/3. Its function is as follows. Catalyzes the reversible oxidation of 3-phospho-D-glycerate to 3-phosphonooxypyruvate, the first step of the phosphorylated L-serine biosynthesis pathway. Also catalyzes the reversible oxidation of 2-hydroxyglutarate to 2-oxoglutarate. The polypeptide is Putative D-3-phosphoglycerate dehydrogenase (Schizosaccharomyces pombe (strain 972 / ATCC 24843) (Fission yeast)).